The chain runs to 222 residues: Deoxyribose-phosphate aldolase (222 aa).

D90 serves as the catalytic Proton donor/acceptor. K152 (schiff-base intermediate with acetaldehyde) is an active-site residue. K181 acts as the Proton donor/acceptor in catalysis.

It belongs to the DeoC/FbaB aldolase family. DeoC type 1 subfamily.

It is found in the cytoplasm. It catalyses the reaction 2-deoxy-D-ribose 5-phosphate = D-glyceraldehyde 3-phosphate + acetaldehyde. It functions in the pathway carbohydrate degradation; 2-deoxy-D-ribose 1-phosphate degradation; D-glyceraldehyde 3-phosphate and acetaldehyde from 2-deoxy-alpha-D-ribose 1-phosphate: step 2/2. Catalyzes a reversible aldol reaction between acetaldehyde and D-glyceraldehyde 3-phosphate to generate 2-deoxy-D-ribose 5-phosphate. This Pectobacterium carotovorum subsp. carotovorum (strain PC1) protein is Deoxyribose-phosphate aldolase.